The primary structure comprises 178 residues: uncharacterized protein (178 aa).

5 helical membrane passes run Gly-13 to Pro-33, Met-48 to Ile-68, Ile-80 to Ile-100, Ile-115 to Leu-135, and Trp-155 to Ser-175.

It localises to the cell membrane. This is an uncharacterized protein from Bacillus subtilis (strain 168).